We begin with the raw amino-acid sequence, 261 residues long: tRNA pseudouridine synthase A (261 aa).

The Nucleophile role is filled by Asp51. Substrate is bound at residue Tyr109.

It belongs to the tRNA pseudouridine synthase TruA family. Homodimer.

The enzyme catalyses uridine(38/39/40) in tRNA = pseudouridine(38/39/40) in tRNA. Formation of pseudouridine at positions 38, 39 and 40 in the anticodon stem and loop of transfer RNAs. In Shewanella sediminis (strain HAW-EB3), this protein is tRNA pseudouridine synthase A.